Consider the following 218-residue polypeptide: ER lumen protein-retaining receptor (218 aa).

Over 1–2 (MN) the chain is Lumenal. A helical membrane pass occupies residues 3–23 (LFSFLGDMLHLGSMLILLFKI). The Cytoplasmic segment spans residues 24–57 (KNDKSCAGVSLKSQILFTIVFTARYLDLFTNYVS). A helical transmembrane segment spans residues 58-78 (LYITFMKITYIAVSYYTLHLI). At 79-94 (ARKYKFTYDKDHDTFK) the chain is on the lumenal side. A helical membrane pass occupies residues 95-115 (IVYLIASCAILSLITYDKTTI). At 116–123 (GIYSTFLE) the chain is on the cytoplasmic side. Residues 124-144 (ILWTFSIYLESIAILPQLILL) form a helical membrane-spanning segment. The Lumenal segment spans residues 145 to 152 (QRTGEVEA). A helical transmembrane segment spans residues 153-173 (LTSNYIVLLGGYRAFYLFNWI). Over 174 to 184 (YRITFYNWSGK) the chain is Cytoplasmic. The chain crosses the membrane as a helical span at residues 185-205 (IEMLSGLLQTILYADFFYYYA). Over 206–218 (KSRMYGKKLVLPQ) the chain is Lumenal.

It belongs to the ERD2 family.

Its subcellular location is the endoplasmic reticulum membrane. Required for the retention of luminal endoplasmic reticulum proteins. Determines the specificity of the luminal ER protein retention system. Also required for normal vesicular traffic through the Golgi. This Dictyostelium discoideum (Social amoeba) protein is ER lumen protein-retaining receptor (kdelr).